A 141-amino-acid chain; its full sequence is Large ribosomal subunit protein uL11 (141 aa).

This sequence belongs to the universal ribosomal protein uL11 family. In terms of assembly, part of the ribosomal stalk of the 50S ribosomal subunit. Interacts with L10 and the large rRNA to form the base of the stalk. L10 forms an elongated spine to which L12 dimers bind in a sequential fashion forming a multimeric L10(L12)X complex. In terms of processing, one or more lysine residues are methylated.

Its function is as follows. Forms part of the ribosomal stalk which helps the ribosome interact with GTP-bound translation factors. This chain is Large ribosomal subunit protein uL11, found in Pseudothermotoga lettingae (strain ATCC BAA-301 / DSM 14385 / NBRC 107922 / TMO) (Thermotoga lettingae).